A 557-amino-acid chain; its full sequence is Fatty acyl-CoA hydrolase precursor, medium chain (557 aa).

The N-terminal stretch at 1-25 (MATEKNTLLSLILTAGITALVATGQ) is a signal peptide. A disulfide bridge links cysteine 93 with cysteine 122. The Acyl-ester intermediate role is filled by serine 227. Residues glutamate 345 and histidine 460 each act as charge relay system in the active site. A glycan (N-linked (GlcNAc...) asparagine) is linked at asparagine 476.

It belongs to the type-B carboxylesterase/lipase family. As to expression, highest levels in uropygial gland, much lower in liver and kidney.

In terms of biological role, fatty acid biosynthesis chain termination and release of the free fatty acid product is achieved by hydrolysis of the thio ester by a thioesterase. This thioesterase may be associated with peroxisome proliferation and may play a role in the production of 3-hydroxy fatty acid diester pheromones. The protein is Fatty acyl-CoA hydrolase precursor, medium chain of Anas platyrhynchos (Mallard).